Reading from the N-terminus, the 159-residue chain is Cytochrome c-type biogenesis protein CcmE (159 aa).

The Cytoplasmic portion of the chain corresponds to 1 to 7 (MTPRQRR). A helical; Signal-anchor for type II membrane protein transmembrane segment spans residues 8–28 (LGMLLAALACAGIALALVLNA). The Periplasmic portion of the chain corresponds to 29–159 (FRSNLVFFFS…LAEGERETQR (131 aa)). Heme is bound by residues histidine 123 and tyrosine 127.

It belongs to the CcmE/CycJ family.

The protein localises to the cell inner membrane. Functionally, heme chaperone required for the biogenesis of c-type cytochromes. Transiently binds heme delivered by CcmC and transfers the heme to apo-cytochromes in a process facilitated by CcmF and CcmH. The polypeptide is Cytochrome c-type biogenesis protein CcmE (Cupriavidus pinatubonensis (strain JMP 134 / LMG 1197) (Cupriavidus necator (strain JMP 134))).